A 417-amino-acid chain; its full sequence is Ribonucleoside-diphosphate reductase small chain (417 aa).

Fe cation is bound by residues Asp-168, Glu-199, and His-202. Residue Tyr-206 is part of the active site. Glu-261, Glu-297, and His-300 together coordinate Fe cation.

This sequence belongs to the ribonucleoside diphosphate reductase small chain family. As to quaternary structure, heterotetramer composed of a homodimer of the large subunit (R1) and a homodimer of the small subunit (R2). Larger multisubunit protein complex are also active, composed of (R1)n(R2)n. Fe cation serves as cofactor.

It catalyses the reaction a 2'-deoxyribonucleoside 5'-diphosphate + [thioredoxin]-disulfide + H2O = a ribonucleoside 5'-diphosphate + [thioredoxin]-dithiol. Functionally, ribonucleoside-diphosphate reductase holoenzyme provides the precursors necessary for viral DNA synthesis. Allows virus growth in non-dividing cells. Catalyzes the biosynthesis of deoxyribonucleotides from the corresponding ribonucleotides. The chain is Ribonucleoside-diphosphate reductase small chain (RNR2) from Acanthamoeba polyphaga mimivirus (APMV).